The chain runs to 372 residues: Chaperone protein DnaJ (372 aa).

The J domain maps to 5–69; it reads DYYEVLGLTK…QKKARYDQFG (65 aa). Residues 129–211 form a CR-type zinc finger; sequence GKETEIEIPK…CRGEGKVQKR (83 aa). Zn(2+) contacts are provided by Cys-142, Cys-145, Cys-159, Cys-162, Cys-185, Cys-188, Cys-199, and Cys-202. CXXCXGXG motif repeat units follow at residues 142–149, 159–166, 185–192, and 199–206; these read CETCHGSG, CSTCNGAG, CTTCHGTG, and CSTCRGEG.

The protein belongs to the DnaJ family. As to quaternary structure, homodimer. Zn(2+) is required as a cofactor.

It is found in the cytoplasm. In terms of biological role, participates actively in the response to hyperosmotic and heat shock by preventing the aggregation of stress-denatured proteins and by disaggregating proteins, also in an autonomous, DnaK-independent fashion. Unfolded proteins bind initially to DnaJ; upon interaction with the DnaJ-bound protein, DnaK hydrolyzes its bound ATP, resulting in the formation of a stable complex. GrpE releases ADP from DnaK; ATP binding to DnaK triggers the release of the substrate protein, thus completing the reaction cycle. Several rounds of ATP-dependent interactions between DnaJ, DnaK and GrpE are required for fully efficient folding. Also involved, together with DnaK and GrpE, in the DNA replication of plasmids through activation of initiation proteins. The protein is Chaperone protein DnaJ of Lysinibacillus sphaericus (strain C3-41).